A 58-amino-acid polypeptide reads, in one-letter code: Small ribosomal subunit protein bS21 (58 aa).

A disordered region spans residues 36-58; it reads EFYEKPSVKRKRKSEAARKRKKF. Basic residues predominate over residues 43 to 58; sequence VKRKRKSEAARKRKKF.

The protein belongs to the bacterial ribosomal protein bS21 family.

The polypeptide is Small ribosomal subunit protein bS21 (Streptococcus uberis (strain ATCC BAA-854 / 0140J)).